A 195-amino-acid chain; its full sequence is Putative CheY-P phosphatase CheC1 (195 aa).

The protein belongs to the CheC family.

Catalyzes the dephosphorylation of CheY-P. The chain is Putative CheY-P phosphatase CheC1 (cheC1) from Halobacterium salinarum (strain ATCC 29341 / DSM 671 / R1).